The sequence spans 340 residues: L-threonine 3-dehydrogenase (340 aa).

Zn(2+) is bound at residue cysteine 38. Active-site charge relay system residues include threonine 40 and histidine 43. Zn(2+) is bound by residues histidine 63, glutamate 64, cysteine 93, cysteine 96, cysteine 99, and cysteine 107. Residues isoleucine 175, aspartate 195, arginine 200, 261-263, and 285-286 each bind NAD(+); these read LGI and IY.

Belongs to the zinc-containing alcohol dehydrogenase family. As to quaternary structure, homotetramer. It depends on Zn(2+) as a cofactor.

Its subcellular location is the cytoplasm. It carries out the reaction L-threonine + NAD(+) = (2S)-2-amino-3-oxobutanoate + NADH + H(+). Its pathway is amino-acid degradation; L-threonine degradation via oxydo-reductase pathway; glycine from L-threonine: step 1/2. Its function is as follows. Catalyzes the NAD(+)-dependent oxidation of L-threonine to 2-amino-3-ketobutyrate. The polypeptide is L-threonine 3-dehydrogenase (Xanthomonas campestris pv. campestris (strain ATCC 33913 / DSM 3586 / NCPPB 528 / LMG 568 / P 25)).